The following is a 3301-amino-acid chain: Cadherin EGF LAG seven-pass G-type receptor 3 (3301 aa).

The signal sequence occupies residues 1–31; the sequence is MARRPLWWGLPGPSTPVLLLLLLSLFPFSRE. At 32–2531 the chain is on the extracellular side; it reads ELGGGGDQDW…RLEGDLELLA (2500 aa). 2 disordered regions span residues 148 to 189 and 202 to 314; these read LPLD…ARRS and KLWE…NRHP. Over residues 267–276 the composition is skewed to basic residues; it reads MRSRGLFRRR. 9 consecutive Cadherin domains span residues 317–424, 425–536, 537–642, 643–747, 748–849, 850–952, 953–1058, 1059–1160, and 1161–1257; these read PQYN…APVF, EQAQ…APQF, SEKR…APIF, VSTP…RPEF, TMKE…RPVF, QSAH…APQF, VASH…APVF, PAEE…SPVL, and NNFQ…VVII. N623 is a glycosylation site (N-linked (GlcNAc...) asparagine). A glycan (N-linked (GlcNAc...) asparagine) is linked at N838. Residues N1173, N1213, N1308, and N1318 are each glycosylated (N-linked (GlcNAc...) asparagine). In terms of domain architecture, EGF-like 1; calcium-binding spans 1366 to 1424; that stretch reads DDNVCLREPCENYMKCVSVLRFDSSAPFLASTSTLFRPIQPIAGLRCRCPPGFTGDFCE. Cystine bridges form between C1370–C1381, C1375–C1412, C1414–C1423, C1430–C1441, C1435–C1450, C1452–C1459, C1468–C1479, C1473–C1489, and C1491–C1502. The EGF-like 2; calcium-binding domain maps to 1426-1460; the sequence is ELDLCYSNPCRNGGACARREGGYTCVCRPRFTDCE. Residues 1464–1503 enclose the EGF-like 3; calcium-binding domain; the sequence is EAGRCVPGVCRNGGTCTNAPNGGFRCQCPAGGAFEGPRCE. Positions 1504–1708 constitute a Laminin G-like 1 domain; that stretch reads VAARSFPPSS…VANNGTMAGC (205 aa). N-linked (GlcNAc...) asparagine glycans are attached at residues N1638 and N1702. Cystine bridges form between C1682–C1708, C1715–C1726, C1720–C1735, and C1737–C1746. One can recognise an EGF-like 4; calcium-binding domain in the interval 1711 to 1747; sequence KSHFCASGPCKNNGFCSERWGGFSCDCPVGFGGKDCR. Positions 1751 to 1933 constitute a Laminin G-like 2 domain; sequence AHPYHFQGNG…SHRVNVEPGC (183 aa). N1759 carries N-linked (GlcNAc...) asparagine glycosylation. 9 cysteine pairs are disulfide-bonded: C1904–C1933, C1939–C1950, C1944–C1959, C1961–C1970, C1974–C1985, C1979–C1997, C1999–C2008, C2016–C2029, and C2031–C2041. One can recognise an EGF-like 5; calcium-binding domain in the interval 1935-1971; the sequence is VTNPCASGPCPPHADCKDLWQTFSCTCRPGYYGPGCV. D1952 carries the (3R)-3-hydroxyaspartate modification. Residues 1972–2002 form the EGF-like 6; calcium-binding domain; the sequence is DACLLNPCQNQGSCRHLQGAPHGYTCDCVSG. The region spanning 2003 to 2042 is the EGF-like 7; calcium-binding domain; sequence YFGQHCEHRVDQQCPRGWWGSPTCGPCNCDVHKGFDPNCN. N-linked (GlcNAc...) asparagine glycosylation occurs at N2042. The 36-residue stretch at 2044–2079 folds into the EGF-like 8; calcium-binding domain; that stretch reads TNGQCHCKEFHYRPRGSDSCLPCDCYPVGSTSRSCA. 5 cysteine pairs are disulfide-bonded: C2048/C2063, C2050/C2066, C2068/C2078, C2087/C2096, and C2099/C2111. The 48-residue stretch at 2066 to 2113 folds into the Laminin EGF-like domain; it reads CDCYPVGSTSRSCAPHSGQCPCRPGALGRQCNSCDSPFAEVTASGCRV. Position 2115 is a phosphotyrosine (Y2115). N2166, N2185, N2375, N2465, and N2497 each carry an N-linked (GlcNAc...) asparagine glycan. Residues 2353–2388 are disordered; that stretch reads LLPSQASQPSPSEVLPTSSNAENATASSVVSPPAPL. Positions 2355–2383 are enriched in low complexity; the sequence is PSQASQPSPSEVLPTSSNAENATASSVVS. The region spanning 2357–2521 is the GAIN-B domain; sequence QASQPSPSEV…GVLMDASPRE (165 aa). 2 disulfide bridges follow: C2471-C2503 and C2491-C2505. A GPS region spans residues 2471-2521; sequence CVQWDPPGPTDQHGMWTARDCELVHRNGSHARCRCSRTGTFGVLMDASPRE. Residues 2532-2552 traverse the membrane as a helical segment; sequence VFTHVVVAVSVTALVLTAAVL. The Cytoplasmic segment spans residues 2553–2563; it reads LSLRSLKSNVR. A helical transmembrane segment spans residues 2564-2584; that stretch reads GIHANVAAALGVAELLFLLGI. Over 2585–2592 the chain is Extracellular; sequence HRTHNQLL. Residues 2593-2613 form a helical membrane-spanning segment; it reads CTAVAILLHYFFLSTFAWLLV. Over 2614–2634 the chain is Cytoplasmic; the sequence is QGLHLYRMQVEPRNVDRGAMR. Residues 2635–2655 form a helical membrane-spanning segment; sequence FYHALGWGVPAVLLGLAVGLD. The Extracellular portion of the chain corresponds to 2656 to 2673; that stretch reads PEGYGNPDFCWISIHEPL. A helical transmembrane segment spans residues 2674 to 2694; sequence IWSFAGPIVLVIVMNGTMFLL. Over 2695–2716 the chain is Cytoplasmic; the sequence is AARTSCSTGQREAKKTSVLTLR. The helical transmembrane segment at 2717-2737 threads the bilayer; that stretch reads SSFLLLLLVSASWLFGLLAVN. The Extracellular portion of the chain corresponds to 2738 to 2744; sequence HSILAFH. Residues 2745 to 2765 traverse the membrane as a helical segment; that stretch reads YLHAGLCGLQGLAVLLLFCVL. At 2766–3301 the chain is on the cytoplasmic side; it reads NADARAAWTP…SEVPRSEGHS (536 aa). Disordered regions lie at residues 2823–2844, 2879–2919, and 2969–2992; these read SSAR…YLRD, AGAD…RPLR, and SNKD…TSLG. A compositionally biased stretch (acidic residues) spans 2881 to 2891; the sequence is ADSDSDSDLSL. Residues 2910-2919 are compositionally biased toward basic residues; the sequence is TRGRFQRPLR. A Phosphotyrosine modification is found at Y3042. The tract at residues 3083–3301 is disordered; that stretch reads APVLHPLSRP…SEVPRSEGHS (219 aa). Phosphoserine is present on S3090. Residues 3094–3111 are compositionally biased toward basic and acidic residues; sequence SQERLDTAPARLEARDRG. Low complexity-rich tracts occupy residues 3168-3189 and 3239-3261; these read SPQR…SLSR and LSSI…STPS. The span at 3276–3289 shows a compositional bias: polar residues; the sequence is TPRSATSHSISELS.

The protein belongs to the G-protein coupled receptor 2 family. LN-TM7 subfamily. As to expression, expressed in the CNS and in the eye.

It localises to the cell membrane. Its function is as follows. Receptor that may have an important role in cell/cell signaling during nervous system formation. The sequence is that of Cadherin EGF LAG seven-pass G-type receptor 3 (Celsr3) from Mus musculus (Mouse).